Reading from the N-terminus, the 305-residue chain is Energy-coupling factor transporter ATP-binding protein EcfA2 (305 aa).

The ABC transporter domain occupies 13–262 (LQNVDITFTN…KNLLQELLIE (250 aa)). Residue 55-62 (GSTGSGKS) coordinates ATP.

The protein belongs to the ABC transporter superfamily. Energy-coupling factor EcfA family. Forms a stable energy-coupling factor (ECF) transporter complex composed of 2 membrane-embedded substrate-binding proteins (S component), 2 ATP-binding proteins (A component) and 2 transmembrane proteins (T component).

It localises to the cell membrane. ATP-binding (A) component of a common energy-coupling factor (ECF) ABC-transporter complex. Unlike classic ABC transporters this ECF transporter provides the energy necessary to transport a number of different substrates. The polypeptide is Energy-coupling factor transporter ATP-binding protein EcfA2 (Spiroplasma kunkelii).